Here is a 95-residue protein sequence, read N- to C-terminus: Small ribosomal subunit protein bS18 (95 aa).

Belongs to the bacterial ribosomal protein bS18 family. In terms of assembly, part of the 30S ribosomal subunit. Forms a tight heterodimer with protein bS6.

Binds as a heterodimer with protein bS6 to the central domain of the 16S rRNA, where it helps stabilize the platform of the 30S subunit. The protein is Small ribosomal subunit protein bS18 of Rickettsia prowazekii (strain Madrid E).